We begin with the raw amino-acid sequence, 62 residues long: Sperm protamine P1 (62 aa).

The interval 1 to 62 (MARYRRHSRS…RRYSRRGRRR (62 aa)) is disordered.

This sequence belongs to the protamine P1 family. In terms of tissue distribution, testis.

The protein resides in the nucleus. Its subcellular location is the chromosome. Protamines substitute for histones in the chromatin of sperm during the haploid phase of spermatogenesis. They compact sperm DNA into a highly condensed, stable and inactive complex. The polypeptide is Sperm protamine P1 (PRM1) (Pseudantechinus bilarni (Sandstone dibbler)).